Consider the following 308-residue polypeptide: Glutaminase (308 aa).

Residues Ser-66, Asn-117, Glu-161, Asn-168, Tyr-192, Tyr-244, and Val-262 each coordinate substrate.

Belongs to the glutaminase family. Homotetramer.

The catalysed reaction is L-glutamine + H2O = L-glutamate + NH4(+). In Cronobacter sakazakii (strain ATCC BAA-894) (Enterobacter sakazakii), this protein is Glutaminase.